A 118-amino-acid chain; its full sequence is Myotrophin (118 aa).

ANK repeat units lie at residues 1–30, 34–65, and 67–98; these read MGDK…DVNR, GGRK…NAPD, and HGIT…NRKG.

Belongs to the myotrophin family.

It is found in the cytoplasm. The protein resides in the nucleus. Its subcellular location is the perinuclear region. Regulates NF-kappa-B transcription factor activity. Promotes growth of cardiomyocytes, but not cardiomyocyte proliferation. Promotes cardiac muscle hypertrophy. Plays a role in the regulation of the growth of actin filaments. Inhibits the activity of the F-actin-capping protein complex. This is Myotrophin (mtpn) from Danio rerio (Zebrafish).